The chain runs to 210 residues: Frataxin, mitochondrial (210 aa).

A mitochondrion-targeting transit peptide spans 1–41 (MWTLGRRAVAGLLASPSPAQAQTLTRVPRPAELAPLCGRRG).

It belongs to the frataxin family. Component of the mitochondrial core iron-sulfur cluster (ISC) complex composed of NFS1, LYRM4, NDUFAB1, ISCU, FXN, and FDX2; this complex is a heterohexamer containing two copies of each monomer. Homodimer. Monomer (probable predominant form). Oligomer. Monomers and polymeric aggregates of &gt;1 MDa have been isolated from mitochondria. A small fraction of heterologous overexpressed recombinant frataxin forms high-molecular weight aggregates that incorporate iron. Interacts with LYRM4. Interacts (via ferrous form) with ISCU; the interaction is possible when both are bound to the dimeric form of the cysteine desulfurase complex (NFS1:LYRM4) and the interaction enhances FXN interaction to the dimeric form of the cysteine desulfurase complex (NFS1:LYRM4). Interacts with FECH; one iron-bound FXN monomer seems to interact with a FECH homodimer. Interacts with SDHA and SDHB. Interacts with ACO2; the interaction is dependent on citrate. Interacts with HSPA9. In terms of assembly, interacts with ACO1. Interacts with ISCU (cytoplasmic form). Post-translationally, processed in two steps by mitochondrial processing peptidase (MPP). MPP first cleaves the precursor to intermediate form and subsequently converts the intermediate to yield frataxin mature form (frataxin(81-210)) which is the predominant form. The additional forms, frataxin(56-210) and frataxin(78-210), seem to be produced when the normal maturation process is impaired; their physiological relevance is unsure. Expressed in the heart, peripheral blood lymphocytes and dermal fibroblasts.

The protein resides in the mitochondrion. It is found in the cytoplasm. It localises to the cytosol. It catalyses the reaction 4 Fe(2+) + O2 + 4 H(+) = 4 Fe(3+) + 2 H2O. Its function is as follows. Functions as an activator of persulfide transfer to the scaffoding protein ISCU as component of the core iron-sulfur cluster (ISC) assembly complex and participates to the [2Fe-2S] cluster assembly. Accelerates sulfur transfer from NFS1 persulfide intermediate to ISCU and to small thiols such as L-cysteine and glutathione leading to persulfuration of these thiols and ultimately sulfide release. Binds ferrous ion and is released from FXN upon the addition of both L-cysteine and reduced FDX2 during [2Fe-2S] cluster assembly. The core iron-sulfur cluster (ISC) assembly complex is involved in the de novo synthesis of a [2Fe-2S] cluster, the first step of the mitochondrial iron-sulfur protein biogenesis. This process is initiated by the cysteine desulfurase complex (NFS1:LYRM4:NDUFAB1) that produces persulfide which is delivered on the scaffold protein ISCU in a FXN-dependent manner. Then this complex is stabilized by FDX2 which provides reducing equivalents to accomplish the [2Fe-2S] cluster assembly. Finally, the [2Fe-2S] cluster is transferred from ISCU to chaperone proteins, including HSCB, HSPA9 and GLRX5. May play a role in the protection against iron-catalyzed oxidative stress through its ability to catalyze the oxidation of Fe(2+) to Fe(3+); the oligomeric form but not the monomeric form has in vitro ferroxidase activity. May be able to store large amounts of iron in the form of a ferrihydrite mineral by oligomerization; however, the physiological relevance is unsure as reports are conflicting and the function has only been shown using heterologous overexpression systems. May function as an iron chaperone protein that protects the aconitase [4Fe-4S]2+ cluster from disassembly and promotes enzyme reactivation. May play a role as a high affinity iron binding partner for FECH that is capable of both delivering iron to ferrochelatase and mediating the terminal step in mitochondrial heme biosynthesis. Functionally, modulates the RNA-binding activity of ACO1. May be involved in the cytoplasmic iron-sulfur protein biogenesis. May contribute to oxidative stress resistance and overall cell survival. The protein is Frataxin, mitochondrial of Homo sapiens (Human).